The sequence spans 254 residues: PF03932 family protein CutC (254 aa).

It belongs to the CutC family.

It localises to the cytoplasm. The chain is PF03932 family protein CutC from Yersinia enterocolitica serotype O:8 / biotype 1B (strain NCTC 13174 / 8081).